We begin with the raw amino-acid sequence, 126 residues long: Topoisomerase I damage affected protein 8 (126 aa).

Residues 1 to 110 (MTGYFLPPQT…VTTVSDDFAG (110 aa)) enclose the PA14 domain.

This sequence belongs to the flocculin family.

The sequence is that of Topoisomerase I damage affected protein 8 (TDA8) from Saccharomyces cerevisiae (strain ATCC 204508 / S288c) (Baker's yeast).